The sequence spans 547 residues: Chaperonin GroEL (547 aa).

ATP-binding positions include 30–33 (TLGP), Lys51, 87–91 (DGTTT), Gly415, 479–481 (NAA), and Asp495.

The protein belongs to the chaperonin (HSP60) family. Forms a cylinder of 14 subunits composed of two heptameric rings stacked back-to-back. Interacts with the co-chaperonin GroES.

It is found in the cytoplasm. The enzyme catalyses ATP + H2O + a folded polypeptide = ADP + phosphate + an unfolded polypeptide.. Together with its co-chaperonin GroES, plays an essential role in assisting protein folding. The GroEL-GroES system forms a nano-cage that allows encapsulation of the non-native substrate proteins and provides a physical environment optimized to promote and accelerate protein folding. This Pseudomonas syringae pv. syringae (strain B728a) protein is Chaperonin GroEL.